A 265-amino-acid chain; its full sequence is Putative pyruvate, phosphate dikinase regulatory protein 2 (265 aa).

150–157 (GVSRTSKT) lines the ADP pocket.

Belongs to the pyruvate, phosphate/water dikinase regulatory protein family. PDRP subfamily.

The enzyme catalyses N(tele)-phospho-L-histidyl/L-threonyl-[pyruvate, phosphate dikinase] + ADP = N(tele)-phospho-L-histidyl/O-phospho-L-threonyl-[pyruvate, phosphate dikinase] + AMP + H(+). It catalyses the reaction N(tele)-phospho-L-histidyl/O-phospho-L-threonyl-[pyruvate, phosphate dikinase] + phosphate + H(+) = N(tele)-phospho-L-histidyl/L-threonyl-[pyruvate, phosphate dikinase] + diphosphate. Its function is as follows. Bifunctional serine/threonine kinase and phosphorylase involved in the regulation of the pyruvate, phosphate dikinase (PPDK) by catalyzing its phosphorylation/dephosphorylation. The chain is Putative pyruvate, phosphate dikinase regulatory protein 2 from Latilactobacillus sakei subsp. sakei (strain 23K) (Lactobacillus sakei subsp. sakei).